The chain runs to 149 residues: Nucleoside diphosphate kinase 1 (149 aa).

Position 1 is an N-acetylmethionine (Met1). ATP contacts are provided by Lys9, Phe57, Arg85, Thr91, Arg102, and Asn112. His115 serves as the catalytic Pros-phosphohistidine intermediate.

It belongs to the NDK family. As to quaternary structure, interacts with CAT1, CAT2 and CAT3. Mg(2+) serves as cofactor.

Its subcellular location is the peroxisome. It is found in the nucleus. The protein localises to the cytoplasm. The catalysed reaction is a 2'-deoxyribonucleoside 5'-diphosphate + ATP = a 2'-deoxyribonucleoside 5'-triphosphate + ADP. It carries out the reaction a ribonucleoside 5'-diphosphate + ATP = a ribonucleoside 5'-triphosphate + ADP. Its function is as follows. Major role in the synthesis of nucleoside triphosphates other than ATP. The ATP gamma phosphate is transferred to the NDP beta phosphate via a ping-pong mechanism, using a phosphorylated active-site intermediate. Plays a role in response to reactive oxygen species (ROS) stress. This chain is Nucleoside diphosphate kinase 1 (NDK1), found in Arabidopsis thaliana (Mouse-ear cress).